Reading from the N-terminus, the 113-residue chain is Molt-inhibiting hormone (113 aa).

Positions 1–35 (MMSLAHSKFSCQRTRLLAVVLLAALWSSSLQQAAA) are cleaved as a signal peptide. 3 disulfide bridges follow: Cys-42/Cys-79, Cys-59/Cys-75, and Cys-62/Cys-88.

This sequence belongs to the arthropod CHH/MIH/GIH/VIH hormone family.

It is found in the secreted. In terms of biological role, inhibits Y-organs where molting hormone (ecdysteroid) is secreted. A molting cycle is initiated when MIH secretion diminishes or stops. This is Molt-inhibiting hormone from Callinectes sapidus (Blue crab).